A 73-amino-acid polypeptide reads, in one-letter code: Neuropeptide-like protein 29 (73 aa).

A signal peptide spans 1–22; sequence MISTSSILVLVVLLACFMAASA. Tyrosine amide occurs at positions 29, 39, 47, 55, and 63. At tryptophan 71 the chain carries Tryptophan amide.

Belongs to the YARP (YGGW-amide related peptide) family. In terms of tissue distribution, weakly or not expressed in absence of infection. Upon infection by D.coniospora, it is expressed in hypoderm. Also expressed in perivulval cells when D.coniospora spores adhere to this region. Expressed in hypodermis upon physical injury.

The protein localises to the secreted. In terms of biological role, antimicrobial peptides that have antibacterial activity against the Gram-negative bacteria S.marcescens. Has antifungal activity against D.coniospora. May play a role in response to physical injury and osmotic stress. Through the neuropeptide receptor nlp-29, induces sleep upon activation of the innate immune response to molting and injury to the adult epidermis. This Caenorhabditis elegans protein is Neuropeptide-like protein 29.